We begin with the raw amino-acid sequence, 278 residues long: 4-deoxy-L-threo-5-hexosulose-uronate ketol-isomerase (278 aa).

Residues His196, His198, Glu203, and His245 each contribute to the Zn(2+) site.

The protein belongs to the KduI family. Zn(2+) is required as a cofactor.

The catalysed reaction is 5-dehydro-4-deoxy-D-glucuronate = 3-deoxy-D-glycero-2,5-hexodiulosonate. The protein operates within glycan metabolism; pectin degradation; 2-dehydro-3-deoxy-D-gluconate from pectin: step 4/5. Its function is as follows. Catalyzes the isomerization of 5-dehydro-4-deoxy-D-glucuronate to 3-deoxy-D-glycero-2,5-hexodiulosonate. The protein is 4-deoxy-L-threo-5-hexosulose-uronate ketol-isomerase of Enterobacter sp. (strain 638).